Here is a 396-residue protein sequence, read N- to C-terminus: MSSKKGSKTSKTSRSVKQTEEYYDDDAEFQNSEDEYPPSDEDLDNSGGSDDENTQSGGLSDAPDDELGEDSATLDIDPDDEAEYDTDGDEKFNPIDEMGEPEDPDDPSEQEEDEVEDLGSEDVDNVEIEDDAADIEDLDPELVDEARNSKSKQCYMKNLNKDFIALDEDDSGIYSKIEYKKIPDNERETDPILTYYEIVRILGTRAQQFNYGAKPLIKGVEGMHPAKMAFVELTAKMTSFIVRRHLPGKKYEDWRIDELGMIHTITEELFVPDNFNWDSITALHKTMISNQQKNSTTDTETLSTQENASTRVSGSNLRSRSGSKSSKSNNSRSASKSNSRTESKSNSRTGSKSNSRTGSKSNSRTGSKSKKSSNTKSKSKRNSDNSDDSDYSDYSE.

2 disordered regions span residues 1–137 (MSSK…DIED) and 290–396 (NQQK…DYSE). Acidic residues-rich tracts occupy residues 21–53 (EYYD…DDEN), 76–88 (IDPD…DTDG), and 97–137 (EMGE…DIED). Residues 290–312 (NQQKNSTTDTETLSTQENASTRV) are compositionally biased toward polar residues. Composition is skewed to low complexity over residues 313–338 (SGSN…SKSN) and 346–366 (NSRT…SRTG). Residues 367 to 380 (SKSKKSSNTKSKSK) show a composition bias toward basic residues. A compositionally biased stretch (acidic residues) spans 385–396 (NSDDSDYSDYSE).

Belongs to the archaeal Rpo6/eukaryotic RPB6 RNA polymerase subunit family.

The catalysed reaction is RNA(n) + a ribonucleoside 5'-triphosphate = RNA(n+1) + diphosphate. In terms of biological role, DNA-dependent RNA polymerase catalyzes the transcription of DNA into RNA using the four ribonucleoside triphosphates as substrates. This is DNA-directed RNA polymerase subunit 6 from Acanthamoeba polyphaga (Amoeba).